A 303-amino-acid chain; its full sequence is MVNRTVEEILALKKQRNAIILAHNYQREEVQEIADFVGDSLELSRQATKVDCDVIVFCGVHFMAETAAILNPDKTVLLPEIDAGCPMADTVDVEELKRWIDRYPYAPIVSYVNTTAEVKALSYACCTSANAPQIVKAVPFSSIIFVPDKNLADWVKKHVPEKDIIAWNGFCPTHHMIKKEDIIRAKKAHPDALVVVHPECRPEVIELADHVASTSGMVRFARAASQKEFIIGTEVGLLYRLKKENPDKVFYPIKKTMICPNMKITTLESILTALKENQYVIKVPEDIRIKAYEAVQRMLTLIS.

Iminosuccinate contacts are provided by His-23 and Ser-40. Cys-85 contributes to the [4Fe-4S] cluster binding site. Iminosuccinate is bound by residues 111 to 113 (YVN) and Ser-128. A [4Fe-4S] cluster-binding site is contributed by Cys-171. Residues 197–199 (HPE) and Thr-214 each bind iminosuccinate. Cys-259 is a [4Fe-4S] cluster binding site.

It belongs to the quinolinate synthase family. Type 2 subfamily. [4Fe-4S] cluster serves as cofactor.

The protein localises to the cytoplasm. It catalyses the reaction iminosuccinate + dihydroxyacetone phosphate = quinolinate + phosphate + 2 H2O + H(+). It participates in cofactor biosynthesis; NAD(+) biosynthesis; quinolinate from iminoaspartate: step 1/1. Functionally, catalyzes the condensation of iminoaspartate with dihydroxyacetone phosphate to form quinolinate. This is Quinolinate synthase from Thermodesulfovibrio yellowstonii (strain ATCC 51303 / DSM 11347 / YP87).